A 1370-amino-acid chain; its full sequence is DNA-directed RNA polymerase subunit beta (1370 aa).

This sequence belongs to the RNA polymerase beta chain family. As to quaternary structure, the RNAP catalytic core consists of 2 alpha, 1 beta, 1 beta' and 1 omega subunit. When a sigma factor is associated with the core the holoenzyme is formed, which can initiate transcription.

It carries out the reaction RNA(n) + a ribonucleoside 5'-triphosphate = RNA(n+1) + diphosphate. In terms of biological role, DNA-dependent RNA polymerase catalyzes the transcription of DNA into RNA using the four ribonucleoside triphosphates as substrates. This is DNA-directed RNA polymerase subunit beta from Bordetella parapertussis (strain 12822 / ATCC BAA-587 / NCTC 13253).